A 549-amino-acid chain; its full sequence is Cytoplasmic trehalase (549 aa).

Residues Arg168, 175-176 (WD), Asn212, 221-223 (RSQ), 292-294 (RDE), and Gly324 contribute to the substrate site. Active-site proton donor/acceptor residues include Asp326 and Glu509. Residue Glu525 participates in substrate binding.

The protein belongs to the glycosyl hydrolase 37 family. Monomer.

The protein localises to the cytoplasm. It catalyses the reaction alpha,alpha-trehalose + H2O = alpha-D-glucose + beta-D-glucose. It functions in the pathway glycan degradation; trehalose degradation; D-glucose from alpha,alpha-trehalose: step 1/1. Hydrolyzes trehalose to glucose. Could be involved, in cells returning to low osmolarity conditions, in the utilization of the accumulated cytoplasmic trehalose, which was synthesized in response to high osmolarity. This is Cytoplasmic trehalase from Shigella boydii serotype 4 (strain Sb227).